The chain runs to 295 residues: Probable adenylate kinase 6, chloroplastic (295 aa).

The transit peptide at 1–46 directs the protein to the chloroplast; it reads MAVSHRLLRPATTTIKNTFSSLFIRSLSSSSSGSSLDPKIDLEEAA. 74-79 lines the ATP pocket; sequence GVGKGT. An NMP region spans residues 94 to 123; sequence ATGDLVREELSSSGLLSSQLKELVNHGKLV. Residues Thr95, Arg100, 121-123, 151-154, and Gln158 each bind AMP; these read KLV and GFPR. Positions 187 to 235 are LID; it reads GRRICSECGGNYNVACIDIKGDDDTPRMYMPPLLPPPNCESKLISRADD. Arg188 serves as a coordination point for ATP. Arg243 lines the AMP pocket. Gly271 is a binding site for ATP.

This sequence belongs to the adenylate kinase family. Monomer.

Its subcellular location is the plastid. It localises to the chloroplast. The enzyme catalyses AMP + ATP = 2 ADP. Functionally, catalyzes the reversible transfer of the terminal phosphate group between ATP and AMP. Plays an important role in cellular energy homeostasis and in adenine nucleotide metabolism. The protein is Probable adenylate kinase 6, chloroplastic of Arabidopsis thaliana (Mouse-ear cress).